The chain runs to 309 residues: Interferon-inducible double-stranded RNA-dependent protein kinase activator A homolog A (309 aa).

A disordered region spans residues 1 to 22; it reads MSQERFPAAPKMSSEKPTSLDA. DRBM domains are found at residues 31-98, 123-191, and 236-304; these read TPIQ…ILRG, NPVG…KFKT, and DYVK…YLKI.

The protein belongs to the PRKRA family. As to quaternary structure, homodimer. Interacts with dicer1 and eif2ak2/pkr. Also able to interact with dsRNA.

Its subcellular location is the cytoplasm. It localises to the perinuclear region. The protein localises to the nucleus. Functionally, activates eif2ak2/pkr in the absence of double-stranded RNA (dsRNA), leading to phosphorylation of eif2s1/efi2-alpha and inhibition of translation and induction of apoptosis. Required for siRNA production by dicer1 and for subsequent siRNA-mediated post-transcriptional gene silencing. Does not seem to be required for processing of pre-miRNA to miRNA by dicer1. This is Interferon-inducible double-stranded RNA-dependent protein kinase activator A homolog A (prkra-a) from Xenopus laevis (African clawed frog).